The primary structure comprises 704 residues: Glycogen [starch] synthase, liver (704 aa).

Residues S8 and S11 each carry the phosphoserine modification. K40 provides a ligand contact to UDP. UDP-alpha-D-glucose is bound by residues H205 and R211. Alpha-D-glucose 6-phosphate-binding residues include H291, E292, Q294, H297, and K301. R331 lines the UDP pocket. R331 contacts UDP-alpha-D-glucose. H501 contributes to the alpha-D-glucose 6-phosphate binding site. 3 residues coordinate UDP-alpha-D-glucose: E510, W512, and G513. T515 contacts UDP. Alpha-D-glucose 6-phosphate contacts are provided by R582 and R586. Residues K620–N704 are disordered. S627 carries the phosphoserine modification. Phosphoserine; by GSK3-alpha and GSK3-beta occurs at positions 641, 645, 649, and 653. Residues S647–S657 show a composition bias toward low complexity. S657 is subject to Phosphoserine; by CK2. Positions V659–A675 are enriched in acidic residues. Phosphoserine is present on S684.

This sequence belongs to the glycosyltransferase 3 family. Part of the glycogen synthase (GS)-glycogenin complex, a heterooctamer composed of a tetramer of GS and 2 dimers of glycogenin, where each GS protomer binds to one glycogenin subunit (via glycogenin C-terminus); the GS tetramer may dissociate from glycogenin dimers to continue glycogen polymerization on its own. May also form a heterooctamer complex with GYG1 (via GYG1 C-terminus). Post-translationally, primed phosphorylation at Ser-657 (site 5) by CSNK2A1 and CSNK2A2 is required for inhibitory phosphorylation at Ser-641 (site 3a), Ser-645 (site 3b), Ser-649 (site 3c) and Ser-653 (site 4) by GSK3A an GSK3B. Dephosphorylation at Ser-641 and Ser-645 by PP1 activates the enzyme. Phosphorylation at Ser-8 is not required for interaction with GYG1. Interaction with GYG1 does not regulate the phosphorylation at Ser-8 and Ser-641. In terms of tissue distribution, specifically expressed in liver (at protein level).

The catalysed reaction is [(1-&gt;4)-alpha-D-glucosyl](n) + UDP-alpha-D-glucose = [(1-&gt;4)-alpha-D-glucosyl](n+1) + UDP + H(+). It functions in the pathway glycan biosynthesis; glycogen biosynthesis. Its activity is regulated as follows. Allosteric activation by glucose-6-phosphate. Phosphorylation reduces the activity towards UDP-glucose. When in the non-phosphorylated state, glycogen synthase does not require glucose-6-phosphate as an allosteric activator; when phosphorylated it does. In terms of biological role, glycogen synthase participates in the glycogen biosynthetic process along with glycogenin and glycogen branching enzyme. Extends the primer composed of a few glucose units formed by glycogenin by adding new glucose units to it. In this context, glycogen synthase transfers the glycosyl residue from UDP-Glc to the non-reducing end of alpha-1,4-glucan. The protein is Glycogen [starch] synthase, liver of Rattus norvegicus (Rat).